Here is a 184-residue protein sequence, read N- to C-terminus: GMP synthase [glutamine-hydrolyzing] subunit A (184 aa).

The Glutamine amidotransferase type-1 domain occupies 3–184 (PLYVVNNHGQ…FENFDGICSE (182 aa)). Residue cysteine 75 is the Nucleophile of the active site. Residues histidine 162 and glutamate 164 contribute to the active site.

As to quaternary structure, heterodimer composed of a glutamine amidotransferase subunit (A) and a GMP-binding subunit (B).

The enzyme catalyses XMP + L-glutamine + ATP + H2O = GMP + L-glutamate + AMP + diphosphate + 2 H(+). It functions in the pathway purine metabolism; GMP biosynthesis; GMP from XMP (L-Gln route): step 1/1. In terms of biological role, catalyzes the synthesis of GMP from XMP. In Methanoculleus marisnigri (strain ATCC 35101 / DSM 1498 / JR1), this protein is GMP synthase [glutamine-hydrolyzing] subunit A.